Reading from the N-terminus, the 117-residue chain is Ig lambda-1 chain V region (117 aa).

A signal peptide spans 1–20 (MAWISLILSLLALSSGGAIS). Q21 carries the pyrrolidone carboxylic acid modification. Residues 21-117 (QAVVTQESAL…YFCALWYSNH (97 aa)) form the Ig-like domain.

This chain is Ig lambda-1 chain V region, found in Mus musculus (Mouse).